The following is a 184-amino-acid chain: Putative manganese efflux pump MntP (184 aa).

6 helical membrane-spanning segments follow: residues 5 to 25 (LISI…VSLT), 38 to 58 (ILYY…IGYI), 67 to 87 (VSTV…LNMI), 107 to 127 (LTLL…TFAL), 133 to 153 (LLPC…GIFI), and 164 to 184 (KFEI…LLGY).

It belongs to the MntP (TC 9.B.29) family.

The protein resides in the cell membrane. Probably functions as a manganese efflux pump. The chain is Putative manganese efflux pump MntP from Methanobrevibacter smithii (strain ATCC 35061 / DSM 861 / OCM 144 / PS).